We begin with the raw amino-acid sequence, 65 residues long: Large ribosomal subunit protein bL35 (65 aa).

Residues 1 to 51 (MPKMKTNRAAAKRFKKTANGGLKSANAYTSHRFHGKTKKQRRQLRGTDMMD) form a disordered region. The segment covering 31–44 (HRFHGKTKKQRRQL) has biased composition (basic residues).

This sequence belongs to the bacterial ribosomal protein bL35 family.

The polypeptide is Large ribosomal subunit protein bL35 (Pediococcus pentosaceus (strain ATCC 25745 / CCUG 21536 / LMG 10740 / 183-1w)).